Consider the following 213-residue polypeptide: MDLCRSSILLLIIALLSPRTLSMRYELKSSKTKCIGEEIHENAMSIGKYFIVNPNEDNHPLPDSHKIIVKVMPPQGKNLHEADKVEAGQFSFTAYENGSYVACITAIDYKPETTLTIDFDWKTGVHSKEWTNVAKKSQVDMMEYQVKTLMDTVISIHEEMYYLREREEEMQELNRSTNSKMAWLSFGSLVVCLSVAGLQFWHLKTFFEKKKLI.

Residues 1–22 (MDLCRSSILLLIIALLSPRTLS) form the signal peptide. Over 23-180 (MRYELKSSKT…QELNRSTNSK (158 aa)) the chain is Lumenal. The region spanning 32 to 148 (TKCIGEEIHE…VDMMEYQVKT (117 aa)) is the GOLD domain. Residue N97 is glycosylated (N-linked (GlcNAc...) asparagine). The stretch at 163-176 (LREREEEMQELNRS) forms a coiled coil. R166 bears the Omega-N-methylated arginine mark. N174 carries an N-linked (GlcNAc...) asparagine glycan. The chain crosses the membrane as a helical span at residues 181 to 203 (MAWLSFGSLVVCLSVAGLQFWHL). The tract at residues 202–213 (HLKTFFEKKKLI) is interaction with ARF1. Residues 204 to 213 (KTFFEKKKLI) are Cytoplasmic-facing. The short motif at 206–207 (FF) is the COPII vesicle coat-binding element. The short motif at 206–213 (FFEKKKLI) is the COPI vesicle coat-binding element.

It belongs to the EMP24/GP25L family. Probably oligomerizes with other members of the EMP24/GP25L family. Associates with the COPI vesicle coat (coatomer). Associates with the COPII vesicle coat (coatomer). Interacts with ARF1 (GDP-bound).

It localises to the endoplasmic reticulum membrane. The protein resides in the golgi apparatus. Its subcellular location is the cis-Golgi network membrane. It is found in the golgi stack membrane. Functionally, involved in vesicular protein trafficking. Mainly functions in the early secretory pathway. Thought to act as cargo receptor at the lumenal side for incorporation of secretory cargo molecules into transport vesicles and to be involved in vesicle coat formation at the cytoplasmic side. On Golgi membranes, acts as a primary receptor for ARF1-GDP which is involved in COPI-vesicle formation. The polypeptide is Transmembrane emp24 domain-containing protein p24delta8 (Arabidopsis thaliana (Mouse-ear cress)).